The chain runs to 711 residues: Forkhead box protein P1 (711 aa).

The span at 1–19 shows a compositional bias: polar residues; the sequence is MMQESGSEAKSNGSTIQNG. The interval 1–41 is disordered; sequence MMQESGSEAKSNGSTIQNGSSGGNHLLECGTLRDTRSNGEA. Ser115 carries the phosphoserine modification. 2 disordered regions span residues 273 to 292 and 305 to 332; these read HTAE…TSTC and MNPH…EHPH. The span at 305–317 shows a compositional bias: polar residues; it reads MNPHASTNGQLSV. Basic and acidic residues predominate over residues 320-332; it reads PKRESLSHEEHPH. Lys321 is covalently cross-linked (Glycyl lysine isopeptide (Lys-Gly) (interchain with G-Cter in SUMO2)). The segment at 340 to 365 adopts a C2H2-type zinc-finger fold; that stretch reads GVCKWPGCEAVCDDFPAFLKHLNSEH. Residues 382 to 403 are leucine-zipper; it reads VQQLELQLAKDKERLQAMMTHL. Glycyl lysine isopeptide (Lys-Gly) (interchain with G-Cter in SUMO2) cross-links involve residues Lys406 and Lys411. A CTBP1-binding region spans residues 416-420; it reads PLNLV. Polar residues predominate over residues 424–437; the sequence is TLSKSASEASPQSL. Residues 424-456 form a disordered region; the sequence is TLSKSASEASPQSLPHTPTTPTAPLTPVTQGPS. Low complexity predominate over residues 438 to 452; that stretch reads PHTPTTPTAPLTPVT. Lys476 participates in a covalent cross-link: Glycyl lysine isopeptide (Lys-Gly) (interchain with G-Cter in SUMO2). Residues 499 to 589 constitute a DNA-binding region (fork-head); that stretch reads RPPFTYASLI…PQKISGNPSL (91 aa). Residues 645–711 are disordered; it reads EHTNSNESDS…EDEPVNEDME (67 aa). Over residues 646–657 the composition is skewed to polar residues; that stretch reads HTNSNESDSSPG. Residue Thr687 is modified to Phosphothreonine. Residue Ser692 is modified to Phosphoserine. Acidic residues predominate over residues 701-711; the sequence is YEDEPVNEDME.

As to quaternary structure, forms homodimers and heterodimers with FOXP2 and FOXP4. Dimerization is required for DNA-binding. Self-associates. Interacts with CTBP1. Interacts with NCOR2 and AR. Interacts with FOXP2. Interacts with TBR1. Interacts with AURKA; this interaction facilitates the phosphorylation of FOXP1, which suppresses the expression of FBXL7. Interacts with ZMYM2.

Its subcellular location is the nucleus. Functionally, transcriptional repressor. Can act with CTBP1 to synergistically repress transcription but CTPBP1 is not essential. Plays an important role in the specification and differentiation of lung epithelium. Acts cooperatively with FOXP4 to regulate lung secretory epithelial cell fate and regeneration by restricting the goblet cell lineage program; the function may involve regulation of AGR2. Essential transcriptional regulator of B-cell development. Involved in regulation of cardiac muscle cell proliferation. Involved in the columnar organization of spinal motor neurons. Promotes the formation of the lateral motor neuron column (LMC) and the preganglionic motor column (PGC) and is required for respective appropriate motor axon projections. The segment-appropriate generation of spinal cord motor columns requires cooperation with other Hox proteins. Can regulate PITX3 promoter activity; may promote midbrain identity in embryonic stem cell-derived dopamine neurons by regulating PITX3. Negatively regulates the differentiation of T follicular helper cells T(FH)s. Involved in maintenance of hair follicle stem cell quiescence; the function probably involves regulation of FGF18. Represses transcription of various pro-apoptotic genes and cooperates with NF-kappa B-signaling in promoting B-cell expansion by inhibition of caspase-dependent apoptosis. Binds to CSF1R promoter elements and is involved in regulation of monocyte differentiation and macrophage functions; repression of CSF1R in monocytes seems to involve NCOR2 as corepressor. Involved in endothelial cell proliferation, tube formation and migration indicative for a role in angiogenesis; the role in neovascularization seems to implicate suppression of SEMA5B. Can negatively regulate androgen receptor signaling. Acts as a transcriptional activator of the FBXL7 promoter; this activity is regulated by AURKA. The sequence is that of Forkhead box protein P1 (Foxp1) from Rattus norvegicus (Rat).